The chain runs to 240 residues: Uridylate kinase (240 aa).

Residue 13 to 16 coordinates ATP; that stretch reads KASG. Positions 21–26 are involved in allosteric activation by GTP; that stretch reads GSQGFG. Glycine 55 is a UMP binding site. Positions 56 and 60 each coordinate ATP. Residues aspartate 75 and 136–143 contribute to the UMP site; that span reads TGNPFFTT. Positions 163, 164, 169, and 172 each coordinate ATP.

Belongs to the UMP kinase family. In terms of assembly, homohexamer.

The protein localises to the cytoplasm. The catalysed reaction is UMP + ATP = UDP + ADP. It participates in pyrimidine metabolism; CTP biosynthesis via de novo pathway; UDP from UMP (UMPK route): step 1/1. Allosterically activated by GTP. Inhibited by UTP. Catalyzes the reversible phosphorylation of UMP to UDP. The sequence is that of Uridylate kinase from Sinorhizobium medicae (strain WSM419) (Ensifer medicae).